The chain runs to 325 residues: tRNA N6-adenosine threonylcarbamoyltransferase (325 aa).

His107, His111, and Tyr127 together coordinate Fe cation. Residues 127-131, Asp159, Gly172, Glu176, and Asn257 each bind substrate; that span reads YVSGG. Asp285 lines the Fe cation pocket.

This sequence belongs to the KAE1 / TsaD family. As to quaternary structure, monomer. Component of the KEOPS complex that consists of Kae1, Bud32, Cgi121 and Pcc1; the whole complex dimerizes. The cofactor is Fe(2+).

Its subcellular location is the cytoplasm. The catalysed reaction is L-threonylcarbamoyladenylate + adenosine(37) in tRNA = N(6)-L-threonylcarbamoyladenosine(37) in tRNA + AMP + H(+). Functionally, required for the formation of a threonylcarbamoyl group on adenosine at position 37 (t(6)A37) in tRNAs that read codons beginning with adenine. Is a component of the KEOPS complex that is probably involved in the transfer of the threonylcarbamoyl moiety of threonylcarbamoyl-AMP (TC-AMP) to the N6 group of A37. Kae1 likely plays a direct catalytic role in this reaction, but requires other protein(s) of the complex to fulfill this activity. The chain is tRNA N6-adenosine threonylcarbamoyltransferase from Thermococcus gammatolerans (strain DSM 15229 / JCM 11827 / EJ3).